We begin with the raw amino-acid sequence, 115 residues long: T-cell receptor gamma chain V region V108B (115 aa).

The first 18 residues, 1-18 (MLLLRWPTFCCLWVFGLG), serve as a signal peptide directing secretion. The segment at 19–115 (QLEQTELSVT…EATYYCAVWI (97 aa)) is v segment.

The sequence is that of T-cell receptor gamma chain V region V108B (Tcrg-V1) from Mus musculus (Mouse).